A 207-amino-acid polypeptide reads, in one-letter code: Ribonuclease HII (207 aa).

The region spanning 17–207 (RIVAGVDEVG…SFKPLAAFVD (191 aa)) is the RNase H type-2 domain. A divalent metal cation-binding residues include aspartate 23, glutamate 24, and aspartate 120.

Belongs to the RNase HII family. It depends on Mn(2+) as a cofactor. Mg(2+) serves as cofactor.

Its subcellular location is the cytoplasm. It carries out the reaction Endonucleolytic cleavage to 5'-phosphomonoester.. Endonuclease that specifically degrades the RNA of RNA-DNA hybrids. This is Ribonuclease HII from Herpetosiphon aurantiacus (strain ATCC 23779 / DSM 785 / 114-95).